The sequence spans 132 residues: Tyrosine phosphatase-like protein N2 (132 aa).

In terms of domain architecture, Tyrosine-protein phosphatase spans 1–132 (MQGPMKNTVA…DILGRFQRVF (132 aa)).

It belongs to the protein-tyrosine phosphatase family.

The protein is Tyrosine phosphatase-like protein N2 (N4) of Microplitis demolitor (Parasitoid wasp).